Consider the following 781-residue polypeptide: Probable beta-D-xylosidase 5 (781 aa).

Residues 1–23 (MSIRRFVRLSLLIIALVSSLCES) form the signal peptide. N-linked (GlcNAc...) asparagine glycosylation is found at N43, N103, and N123. D291 is an active-site residue. N-linked (GlcNAc...) asparagine glycosylation is found at N342, N424, N504, N543, N601, and N653.

Belongs to the glycosyl hydrolase 3 family.

Its subcellular location is the secreted. The protein localises to the extracellular space. The protein resides in the extracellular matrix. This chain is Probable beta-D-xylosidase 5 (BXL5), found in Arabidopsis thaliana (Mouse-ear cress).